Here is a 243-residue protein sequence, read N- to C-terminus: GTP cyclohydrolase 1 type 2 (243 aa).

A divalent metal cation is bound by residues His63, His64, Asp102, His209, and Glu213.

Belongs to the GTP cyclohydrolase I type 2/NIF3 family. As to quaternary structure, homohexamer.

The catalysed reaction is GTP + H2O = 7,8-dihydroneopterin 3'-triphosphate + formate + H(+). The protein operates within cofactor biosynthesis; 7,8-dihydroneopterin triphosphate biosynthesis; 7,8-dihydroneopterin triphosphate from GTP: step 1/1. Its function is as follows. Converts GTP to dihydroneopterin triphosphate. Is not active with GDP, GMP, ATP, CTP or UTP as substrate. The sequence is that of GTP cyclohydrolase 1 type 2 from Helicobacter pylori (strain ATCC 700392 / 26695) (Campylobacter pylori).